A 142-amino-acid chain; its full sequence is Large ribosomal subunit protein uL13 (142 aa).

The protein belongs to the universal ribosomal protein uL13 family. In terms of assembly, part of the 50S ribosomal subunit.

In terms of biological role, this protein is one of the early assembly proteins of the 50S ribosomal subunit, although it is not seen to bind rRNA by itself. It is important during the early stages of 50S assembly. The chain is Large ribosomal subunit protein uL13 from Shewanella baltica (strain OS185).